Consider the following 89-residue polypeptide: Probable monothiol glutaredoxin GrlA (89 aa).

Residues 1-89 form the Glutaredoxin domain; sequence MLYMKGTPKM…EPMLRDAVAA (89 aa). Lys5 lines the glutathione pocket. Cys13 is a binding site for [2Fe-2S] cluster. Residues Arg42, Phe54, and 67 to 68 contribute to the glutathione site; that span reads SD.

Belongs to the glutaredoxin family. Monothiol subfamily.

The protein is Probable monothiol glutaredoxin GrlA (grlA) of Legionella pneumophila subsp. pneumophila (strain Philadelphia 1 / ATCC 33152 / DSM 7513).